A 78-amino-acid chain; its full sequence is Beta-defensin 29 (78 aa).

A signal peptide spans 1–23; it reads MPVTKPYFVTVAVLLILVDKTTG. 3 cysteine pairs are disulfide-bonded: cysteine 40–cysteine 67, cysteine 47–cysteine 61, and cysteine 51–cysteine 68.

Belongs to the beta-defensin family.

Its subcellular location is the secreted. Has antibacterial activity. The polypeptide is Beta-defensin 29 (Defb29) (Rattus norvegicus (Rat)).